The following is a 138-amino-acid chain: Transmembrane protein 170A (138 aa).

At M1–V44 the chain is on the lumenal side. N26 is a glycosylation site (N-linked (GlcNAc...) asparagine). The chain crosses the membrane as a helical span at residues F45–F65. Residues T66 to S79 lie on the Cytoplasmic side of the membrane. The helical transmembrane segment at L80 to A100 threads the bilayer. Residues G101 to M110 are Lumenal-facing. A helical transmembrane segment spans residues I111–F131. At L132 to L138 the chain is on the cytoplasmic side.

The protein belongs to the TMEM170 family.

It localises to the endoplasmic reticulum membrane. The protein localises to the nucleus envelope. Functionally, may regulate membrane morphogenesis in the endoplasmic reticulum (ER) by promoting ER sheet formation at the expense of ER tubules. The sequence is that of Transmembrane protein 170A (TMEM170A) from Gallus gallus (Chicken).